A 356-amino-acid polypeptide reads, in one-letter code: DNA polymerase IV (356 aa).

The UmuC domain occupies 6 to 187; that stretch reads IIHIDMDAFY…QPIRRLHGVG (182 aa). Mg(2+) is bound by residues Asp10 and Asp105. The active site involves Glu106.

It belongs to the DNA polymerase type-Y family. Monomer. It depends on Mg(2+) as a cofactor.

The protein localises to the cytoplasm. The catalysed reaction is DNA(n) + a 2'-deoxyribonucleoside 5'-triphosphate = DNA(n+1) + diphosphate. In terms of biological role, poorly processive, error-prone DNA polymerase involved in untargeted mutagenesis. Copies undamaged DNA at stalled replication forks, which arise in vivo from mismatched or misaligned primer ends. These misaligned primers can be extended by PolIV. Exhibits no 3'-5' exonuclease (proofreading) activity. May be involved in translesional synthesis, in conjunction with the beta clamp from PolIII. In Halorhodospira halophila (strain DSM 244 / SL1) (Ectothiorhodospira halophila (strain DSM 244 / SL1)), this protein is DNA polymerase IV.